The following is a 94-amino-acid chain: Cell division protein CrgA (94 aa).

The next 2 helical transmembrane spans lie at 31 to 51 (VWFVALFVGLMLIGLIWLLVF) and 71 to 91 (LGPWNYAIAFAFMITGLLLTM).

It belongs to the CrgA family.

It is found in the cell membrane. Involved in cell division. The chain is Cell division protein CrgA from Mycobacterium sp. (strain JLS).